The sequence spans 512 residues: ATP synthase subunit alpha (512 aa).

Residue 169–176 (GDRQTGKT) participates in ATP binding.

The protein belongs to the ATPase alpha/beta chains family. In terms of assembly, F-type ATPases have 2 components, CF(1) - the catalytic core - and CF(0) - the membrane proton channel. CF(1) has five subunits: alpha(3), beta(3), gamma(1), delta(1), epsilon(1). CF(0) has three main subunits: a(1), b(2) and c(9-12). The alpha and beta chains form an alternating ring which encloses part of the gamma chain. CF(1) is attached to CF(0) by a central stalk formed by the gamma and epsilon chains, while a peripheral stalk is formed by the delta and b chains.

It is found in the cell inner membrane. The enzyme catalyses ATP + H2O + 4 H(+)(in) = ADP + phosphate + 5 H(+)(out). Functionally, produces ATP from ADP in the presence of a proton gradient across the membrane. The alpha chain is a regulatory subunit. This is ATP synthase subunit alpha from Ruegeria pomeroyi (strain ATCC 700808 / DSM 15171 / DSS-3) (Silicibacter pomeroyi).